Reading from the N-terminus, the 35-residue chain is Potassium channel toxin (35 aa).

3 disulfide bridges follow: Cys-6-Cys-25, Cys-11-Cys-30, and Cys-15-Cys-32.

The protein belongs to the short scorpion toxin superfamily. Potassium channel inhibitor family. Alpha-KTx 21 subfamily. Expressed by the venom gland.

The protein localises to the secreted. Its function is as follows. Toxin that blocks voltage-gated potassium channels (Kv). This chain is Potassium channel toxin, found in Tityus metuendus (Scorpion).